The sequence spans 382 residues: Alcohol dehydrogenase 1 (382 aa).

Cysteine 49, threonine 51, histidine 71, cysteine 101, cysteine 104, cysteine 107, cysteine 115, and cysteine 179 together coordinate Zn(2+). The an alcohol site is built by threonine 51 and histidine 71. Threonine 51 serves as a coordination point for NAD(+). NAD(+)-binding positions include 204–209 (GLGAVG), aspartate 228, arginine 233, threonine 275, valine 298, 298–300 (VGV), phenylalanine 325, and arginine 375.

The protein belongs to the zinc-containing alcohol dehydrogenase family. As to quaternary structure, homodimer. Requires Zn(2+) as cofactor.

The protein localises to the cytoplasm. It catalyses the reaction a primary alcohol + NAD(+) = an aldehyde + NADH + H(+). The enzyme catalyses a secondary alcohol + NAD(+) = a ketone + NADH + H(+). This protein is responsible for the conversion of alcohols to aldehydes in plants and is important for NAD metabolism during anaerobic respiration. This is Alcohol dehydrogenase 1 (ADH1) from Petunia hybrida (Petunia).